Here is a 43-residue protein sequence, read N- to C-terminus: U5-hexatoxin-Mr1a (43 aa).

Intrachain disulfides connect cysteine 1-cysteine 16, cysteine 8-cysteine 21, cysteine 15-cysteine 36, and cysteine 17-cysteine 43.

It belongs to the neurotoxin 35 family. In terms of processing, contains 4 disulfide bonds. Expressed by the venom gland.

Its subcellular location is the secreted. Functionally, this toxin blocks the neuromuscular transmission, and also acts on muscle. It exerts an effect of first exciting and then inhibiting the contraction of muscle. This toxin is active only against mammals. This is U5-hexatoxin-Mr1a from Macrothele raveni (Funnel-web spider).